Reading from the N-terminus, the 222-residue chain is Thiol:disulfide interchange protein DsbL (222 aa).

A signal peptide spans 1–27 (MSAKWINSIFKSVVLTAALALPFTASA). The region spanning 28–221 (FTEGTDYMVL…MAQLVRELAT (194 aa)) is the Thioredoxin domain. An intrachain disulfide couples Cys56 to Cys59.

It belongs to the thioredoxin family. DsbL subfamily. Interacts with DsbI.

The protein resides in the periplasm. Its function is as follows. Involved in disulfide-bond formation. Acts by transferring its disulfide bond to other proteins. Part of a redox system composed of DsbI and DsbL that mediates formation of an essential disulfide bond in AssT. This chain is Thiol:disulfide interchange protein DsbL, found in Lelliottia amnigena (Enterobacter amnigenus).